The following is a 295-amino-acid chain: Large ribosomal subunit protein uL2 (295 aa).

The segment at tryptophan 243 to serine 295 is disordered. Basic and acidic residues predominate over residues aspartate 256–valine 287.

It belongs to the universal ribosomal protein uL2 family. In terms of assembly, part of the 50S ribosomal subunit. Forms a bridge to the 30S subunit in the 70S ribosome.

In terms of biological role, one of the primary rRNA binding proteins. Required for association of the 30S and 50S subunits to form the 70S ribosome, for tRNA binding and peptide bond formation. It has been suggested to have peptidyltransferase activity; this is somewhat controversial. Makes several contacts with the 16S rRNA in the 70S ribosome. This is Large ribosomal subunit protein uL2 from Aquifex pyrophilus.